The primary structure comprises 501 residues: Sarpagan bridge enzyme (501 aa).

Residues 3–23 form a helical; Signal-anchor for type II membrane protein membrane-spanning segment; it reads VMQLSFSYPALFLFVFFLFML. A heme-binding site is contributed by C441.

It belongs to the cytochrome P450 family. Heme serves as cofactor. Highly expressed in roots. Expressed at low levels in stems.

The protein resides in the endoplasmic reticulum membrane. It carries out the reaction (19E)-geissoschizine + reduced [NADPH--hemoprotein reductase] + O2 = polyneuridine aldehyde + oxidized [NADPH--hemoprotein reductase] + 2 H2O + H(+). It catalyses the reaction tetrahydroalstonine + A + reduced [NADPH--hemoprotein reductase] + O2 = alstonine + AH2 + oxidized [NADPH--hemoprotein reductase] + 2 H2O + H(+). The catalysed reaction is ajmalicine + A + reduced [NADPH--hemoprotein reductase] + O2 = serpentine + AH2 + oxidized [NADPH--hemoprotein reductase] + 2 H2O + H(+). It participates in alkaloid biosynthesis; ajmaline biosynthesis. Functionally, monooxygenase involved in the biosynthesis of ajmaline-type monoterpenoid indole alkaloids (MIAs) natural products, important plant-derived pharmaceuticals used in the therapy of heart disorders. Converts by cyclization the strictosidine-derived geissoschizine to the sarpagan alkaloid polyneuridine aldehyde, precursor of vomilenine, an intermediate chemical in the biosynthesis of ajmaline. Converts by aromatization the tetrahydro-beta-carboline alkaloids tetrahydroalstonine and ajmalicine to the corresponding beta-carboline alkaloids alstonine and serpentine, respectively. The chain is Sarpagan bridge enzyme from Gelsemium sempervirens (Carolina jasmine).